We begin with the raw amino-acid sequence, 933 residues long: Envelope glycoprotein B (933 aa).

The signal sequence occupies residues 1-36; that stretch reads MPRPRPRALRGSSPGWALVAAVAVGAALLMATLAVA. Positions 36 to 49 are enriched in low complexity; the sequence is AAPPGPRGPAARSP. Positions 36-115 are disordered; it reads AAPPGPRGPA…GNGTRSAARR (80 aa). Over 37–797 the chain is Virion surface; that stretch reads APPGPRGPAA…SGVSSFLSNP (761 aa). Over residues 54–69 the composition is skewed to acidic residues; that stretch reads ASVEPVEDGDYDEYDD. N-linked (GlcNAc...) asparagine; by host glycans are attached at residues Asn107 and Asn161. 5 cysteine pairs are disulfide-bonded: Cys136–Cys596, Cys153–Cys552, Cys227–Cys291, Cys384–Cys432, and Cys619–Cys656. 2 involved in fusion and/or binding to host membrane regions span residues 193–199 and 278–285; these read TWQGSRY and AHAGFYKT. Residues Asn418 and Asn450 are each glycosylated (N-linked (GlcNAc...) asparagine; by host). N-linked (GlcNAc...) asparagine; by host glycans are attached at residues Asn697 and Asn747. Hydrophobic membrane proximal region stretches follow at residues 742 to 795 and 754 to 795; these read IDRI…SFLS and LMAG…SFLS. A helical membrane pass occupies residues 798–818; the sequence is FGALAVGLLVLAGLVAAFFAM. Over 819–933 the chain is Intravirion; the sequence is RYIMRLRANP…SKDDEDGADP (115 aa). The short motif at 881-884 is the Golgi targeting element; it reads YMTL. An Internalization motif motif is present at residues 920–923; it reads YQPL.

It belongs to the herpesviridae glycoprotein B family. As to quaternary structure, homotrimer; disulfide-linked. Binds to heparan sulfate proteoglycans. Interacts with gH/gL heterodimer.

The protein localises to the virion membrane. It localises to the host cell membrane. The protein resides in the host endosome membrane. It is found in the host Golgi apparatus membrane. Functionally, envelope glycoprotein that forms spikes at the surface of virion envelope. Essential for the initial attachment to heparan sulfate moieties of the host cell surface proteoglycans. Involved in fusion of viral and cellular membranes leading to virus entry into the host cell. Following initial binding to its host receptors, membrane fusion is mediated by the fusion machinery composed at least of gB and the heterodimer gH/gL. May be involved in the fusion between the virion envelope and the outer nuclear membrane during virion egress. This chain is Envelope glycoprotein B, found in Herpesvirus ateles type 1 (strain Lennette).